The following is a 232-amino-acid chain: RNA chaperone ProQ (232 aa).

Residues 105 to 182 (EAKARVQAQR…REEQHTPVSD (78 aa)) form a disordered region. Positions 117–136 (QQAKKREAAAAAGEKEDAPR) are enriched in basic and acidic residues. Positions 137–146 (RERKPRPTTP) are enriched in basic residues. Over residues 147–177 (RRKEGAERKPRSQKPVEKAPKTVKAPREEQH) the composition is skewed to basic and acidic residues.

This sequence belongs to the ProQ family.

It is found in the cytoplasm. RNA chaperone with significant RNA binding, RNA strand exchange and RNA duplexing activities. May regulate ProP activity through an RNA-based, post-transcriptional mechanism. The sequence is that of RNA chaperone ProQ from Escherichia coli (strain UTI89 / UPEC).